A 44-amino-acid chain; its full sequence is Photosystem I reaction center subunit IX (44 aa).

The chain crosses the membrane as a helical span at residues 7-27 (YLSVAPVLTTLWFGSLAGLLI).

This sequence belongs to the PsaJ family.

The protein localises to the plastid. It localises to the chloroplast thylakoid membrane. Its function is as follows. May help in the organization of the PsaE and PsaF subunits. The polypeptide is Photosystem I reaction center subunit IX (Liriodendron tulipifera (Tuliptree)).